The sequence spans 363 residues: MSAIYNFCAGPAMLPAAVMKKAQQELLDWNGQGVSVMEISHRSKEFIALTQQAESDLRELMQIPTNYHVLFMHGGGRGQFSAVVNNFLGNHGRALYLVSGQWSSAALAEAQKLVGEAQIDSLNIVEKHNGLNAVVLPDLHKIDADYRYVHYCPNETVDGIEIFDELDSPWPIVADLSSTIMSREIDVSRYGLIYAGAQKNIGPSGLSIVIVRDDMLKLPSLPQSSIMDYRLAVEHDSMFNTPPTFAWYLAAEVFAWLKSTGGISSIAKINQQKAQMLYQCIDGNAFYRNGVVAANRSQMNVTFQLVNEALDGEFLKQAQIAGLVALKGHRIVGGMRASLYNAMPLDGIVALVKFMNEFAAKHS.

Arginine 42 serves as a coordination point for L-glutamate. Pyridoxal 5'-phosphate is bound by residues 76 to 77, tryptophan 102, threonine 156, aspartate 175, and glutamine 198; that span reads GR. N6-(pyridoxal phosphate)lysine is present on lysine 199. Position 240–241 (240–241) interacts with pyridoxal 5'-phosphate; the sequence is NT.

It belongs to the class-V pyridoxal-phosphate-dependent aminotransferase family. SerC subfamily. Homodimer. It depends on pyridoxal 5'-phosphate as a cofactor.

The protein resides in the cytoplasm. The catalysed reaction is O-phospho-L-serine + 2-oxoglutarate = 3-phosphooxypyruvate + L-glutamate. The enzyme catalyses 4-(phosphooxy)-L-threonine + 2-oxoglutarate = (R)-3-hydroxy-2-oxo-4-phosphooxybutanoate + L-glutamate. Its pathway is amino-acid biosynthesis; L-serine biosynthesis; L-serine from 3-phospho-D-glycerate: step 2/3. The protein operates within cofactor biosynthesis; pyridoxine 5'-phosphate biosynthesis; pyridoxine 5'-phosphate from D-erythrose 4-phosphate: step 3/5. Functionally, catalyzes the reversible conversion of 3-phosphohydroxypyruvate to phosphoserine and of 3-hydroxy-2-oxo-4-phosphonooxybutanoate to phosphohydroxythreonine. The polypeptide is Phosphoserine aminotransferase (Shewanella baltica (strain OS185)).